Consider the following 333-residue polypeptide: Tubulin alpha chain (333 aa).

GTP is bound by residues serine 48, glycine 52, threonine 53, threonine 88, asparagine 115, and asparagine 137.

It belongs to the tubulin family. Dimer of alpha and beta chains. A typical microtubule is a hollow water-filled tube with an outer diameter of 25 nm and an inner diameter of 15 nM. Alpha-beta heterodimers associate head-to-tail to form protofilaments running lengthwise along the microtubule wall with the beta-tubulin subunit facing the microtubule plus end conferring a structural polarity. Microtubules usually have 13 protofilaments but different protofilament numbers can be found in some organisms and specialized cells. Mg(2+) serves as cofactor. Undergoes a tyrosination/detyrosination cycle, the cyclic removal and re-addition of a C-terminal tyrosine residue by the enzymes tubulin tyrosine carboxypeptidase (TTCP) and tubulin tyrosine ligase (TTL), respectively.

It is found in the cytoplasm. Its subcellular location is the cytoskeleton. It catalyses the reaction GTP + H2O = GDP + phosphate + H(+). Its function is as follows. Tubulin is the major constituent of microtubules, a cylinder consisting of laterally associated linear protofilaments composed of alpha- and beta-tubulin heterodimers. Microtubules grow by the addition of GTP-tubulin dimers to the microtubule end, where a stabilizing cap forms. Below the cap, tubulin dimers are in GDP-bound state, owing to GTPase activity of alpha-tubulin. The polypeptide is Tubulin alpha chain (tuba) (Dictyostelium purpureum (Slime mold)).